Reading from the N-terminus, the 449-residue chain is Myb-related protein Pp1 (449 aa).

The HTH myb-type domain maps to 1 to 30 (LGNRWSAIAIPRRTDNEIKNYWNTHLKKRL). The segment at residues 5 to 26 (WSAIAIPRRTDNEIKNYWNTHL) is a DNA-binding region (H-T-H motif).

Its subcellular location is the nucleus. Possible transcription activator. This chain is Myb-related protein Pp1 (PP1), found in Physcomitrium patens (Spreading-leaved earth moss).